The sequence spans 177 residues: Biotin-dependent acetyl-/propionyl-coenzyme A carboxylase epsilon subunit (177 aa).

The interval 1 to 112 is disordered; the sequence is MGTCPCESSE…TEKPLHPHEP (112 aa). Residues 18 to 100 are compositionally biased toward polar residues; that stretch reads VSGTNEVSDG…SDGNETNNPA (83 aa).

In terms of assembly, interacts with the AccA3/AccD5 biotin-dependent acyl-CoA carboxylase complex. Interacts with the AccA3/AccD6 complex. Is also part of the long-chain acyl-CoA carboxylase (LCC) complex, which is composed of AccA3, AccD4, AccD5 and AccE5. The four subunits are essential for activity, but AccD5, together with AccE5, probably plays a structural role rather than a catalytic one.

Stimulates activity of the AccA3/AccD5 biotin-dependent acyl-CoA carboxylase complex. Interacts with AccD5 and modulates its carboxylase activity for acetyl-CoA and propionyl-CoA. Inhibits activity of the AccA3/AccD6 complex. Is also required for the activity of the long-chain acyl-CoA carboxylase (LCC) complex. The polypeptide is Biotin-dependent acetyl-/propionyl-coenzyme A carboxylase epsilon subunit (Mycobacterium tuberculosis (strain ATCC 25618 / H37Rv)).